A 77-amino-acid polypeptide reads, in one-letter code: Large ribosomal subunit protein eL20 (77 aa).

It belongs to the eukaryotic ribosomal protein eL20 family. As to quaternary structure, part of the 50S ribosomal subunit. Binds 23S rRNA.

The sequence is that of Large ribosomal subunit protein eL20 from Thermococcus gammatolerans (strain DSM 15229 / JCM 11827 / EJ3).